We begin with the raw amino-acid sequence, 510 residues long: NAD(P)H-quinone oxidoreductase subunit 2 A, chloroplastic (510 aa).

Transmembrane regions (helical) follow at residues 24–44, 59–79, 99–119, 124–144, 149–169, 183–203, 229–249, 295–315, 323–343, 354–374, 395–415, and 418–438; these read LLLFHGSFIFPECILIFGLIL, WFYFISSTTLVMSITALLFRW, IFQFLILLCSTLCIPLSVEYI, MAITEFLLFVLTATLGGMFLC, LITLFVAPECFSLCSYLLSGY, YLLMGGASSSILVHGFSWLYG, ISIALISITVGIGFKLSPAPF, WHLLLEILAILSMILGNLIAI, MLAYSSIGQIGYVIIGIIVGD, YMLFYISMNLGTFACIVSFGL, ALSLALCLLSLGGLPPLAGFF, and LHLFWCGWQAGLYFLVSIGLL.

The protein belongs to the complex I subunit 2 family. In terms of assembly, NDH is composed of at least 16 different subunits, 5 of which are encoded in the nucleus.

It is found in the plastid. The protein localises to the chloroplast thylakoid membrane. The catalysed reaction is a plastoquinone + NADH + (n+1) H(+)(in) = a plastoquinol + NAD(+) + n H(+)(out). It catalyses the reaction a plastoquinone + NADPH + (n+1) H(+)(in) = a plastoquinol + NADP(+) + n H(+)(out). Functionally, NDH shuttles electrons from NAD(P)H:plastoquinone, via FMN and iron-sulfur (Fe-S) centers, to quinones in the photosynthetic chain and possibly in a chloroplast respiratory chain. The immediate electron acceptor for the enzyme in this species is believed to be plastoquinone. Couples the redox reaction to proton translocation, and thus conserves the redox energy in a proton gradient. This is NAD(P)H-quinone oxidoreductase subunit 2 A, chloroplastic from Dioscorea elephantipes (Elephant's foot yam).